Consider the following 94-residue polypeptide: Large ribosomal subunit protein eL43A (94 aa).

Residues 39-62 (CPFCGRNTVKRTAAGIWCCNGKGC) form a C4-type zinc finger.

This sequence belongs to the eukaryotic ribosomal protein eL43 family. Component of the large ribosomal subunit (LSU). Mature yeast ribosomes consist of a small (40S) and a large (60S) subunit. The 40S small subunit contains 1 molecule of ribosomal RNA (18S rRNA) and at least 33 different proteins. The large 60S subunit contains 3 rRNA molecules (25S, 5.8S and 5S rRNA) and at least 46 different proteins.

Its subcellular location is the cytoplasm. Component of the ribosome, a large ribonucleoprotein complex responsible for the synthesis of proteins in the cell. The small ribosomal subunit (SSU) binds messenger RNAs (mRNAs) and translates the encoded message by selecting cognate aminoacyl-transfer RNA (tRNA) molecules. The large subunit (LSU) contains the ribosomal catalytic site termed the peptidyl transferase center (PTC), which catalyzes the formation of peptide bonds, thereby polymerizing the amino acids delivered by tRNAs into a polypeptide chain. The nascent polypeptides leave the ribosome through a tunnel in the LSU and interact with protein factors that function in enzymatic processing, targeting, and the membrane insertion of nascent chains at the exit of the ribosomal tunnel. The sequence is that of Large ribosomal subunit protein eL43A (rpl4301) from Schizosaccharomyces pombe (strain 972 / ATCC 24843) (Fission yeast).